A 390-amino-acid chain; its full sequence is Chorismate synthase 1 (390 aa).

Positions 39 and 45 each coordinate NADP(+). FMN is bound by residues 132 to 134, 253 to 254, G298, 313 to 317, and R339; these read RSS, NA, and KPIPT.

It belongs to the chorismate synthase family. Homotetramer. FMNH2 serves as cofactor.

It catalyses the reaction 5-O-(1-carboxyvinyl)-3-phosphoshikimate = chorismate + phosphate. The protein operates within metabolic intermediate biosynthesis; chorismate biosynthesis; chorismate from D-erythrose 4-phosphate and phosphoenolpyruvate: step 7/7. Functionally, catalyzes the anti-1,4-elimination of the C-3 phosphate and the C-6 proR hydrogen from 5-enolpyruvylshikimate-3-phosphate (EPSP) to yield chorismate, which is the branch point compound that serves as the starting substrate for the three terminal pathways of aromatic amino acid biosynthesis. This reaction introduces a second double bond into the aromatic ring system. The sequence is that of Chorismate synthase 1 from Bacillus anthracis.